A 123-amino-acid chain; its full sequence is Small ribosomal subunit protein uS13 (123 aa).

The tract at residues His93 to Lys123 is disordered. The span at Ala108 to Lys123 shows a compositional bias: basic residues.

Belongs to the universal ribosomal protein uS13 family. In terms of assembly, part of the 30S ribosomal subunit. Forms a loose heterodimer with protein S19. Forms two bridges to the 50S subunit in the 70S ribosome.

Its function is as follows. Located at the top of the head of the 30S subunit, it contacts several helices of the 16S rRNA. In the 70S ribosome it contacts the 23S rRNA (bridge B1a) and protein L5 of the 50S subunit (bridge B1b), connecting the 2 subunits; these bridges are implicated in subunit movement. Contacts the tRNAs in the A and P-sites. The sequence is that of Small ribosomal subunit protein uS13 from Leuconostoc citreum (strain KM20).